The primary structure comprises 199 residues: Fe/S biogenesis protein NfuA (199 aa).

Residues C151 and C154 each coordinate [4Fe-4S] cluster.

It belongs to the NfuA family. In terms of assembly, homodimer. It depends on [4Fe-4S] cluster as a cofactor.

Involved in iron-sulfur cluster biogenesis. Binds a 4Fe-4S cluster, can transfer this cluster to apoproteins, and thereby intervenes in the maturation of Fe/S proteins. Could also act as a scaffold/chaperone for damaged Fe/S proteins. This Stenotrophomonas maltophilia (strain R551-3) protein is Fe/S biogenesis protein NfuA.